Here is an 83-residue protein sequence, read N- to C-terminus: Beta/kappa-theraphotoxin-Cg2a (83 aa).

An N-terminal signal peptide occupies residues 1–21 (MKASVFAVILGLVVLCACSFA). Positions 22-53 (EDEQDQFVSPNELLKSMFVESRHEFTPEVEGR) are excised as a propeptide. 3 disulfide bridges follow: Cys-55-Cys-69, Cys-62-Cys-74, and Cys-68-Cys-78. Isoleucine amide is present on Ile-82.

Belongs to the neurotoxin 30 (phrixotoxin) family. As to expression, expressed by the venom gland.

The protein localises to the secreted. Its function is as follows. This gating-modifier toxin shows an important inhibitory activity on sodium channels. It is very active on Nav1.7/SCN9A (IC(50)~0.6 nM), and also shows activity on Nav1.3/SCN3A (IC(50)=292 nM), Nav1.4/SCN4A (IC(50)=2.2-159 nM), and Nav1.5/SCN5A (IC(50)=2.3-2.9 uM). It has also been shown to inhibit tetrodotoxin (TTX)-resistant (IC(50)=27.6 nM) and TTX-sensitive (IC(50)=30.2 nM) sodium channels in rat dorsal root ganglion neurons. Lower inhibitory activity has also been shown on potassium channels: Kv4.2/KCND2 (IC(50)=604.2 nM), Kv4.3/KCND3 (IC(50)=425.1 nM), and Kv2.1/KCNB1 (IC(50)=14.3 uM). It binds to phospholipid membranes. Like its analog AM-8145, it may act by interacting only with the second voltage-sensor domain of Nav1.7/SCN9A. The polypeptide is Beta/kappa-theraphotoxin-Cg2a (Chilobrachys guangxiensis (Chinese earth tiger tarantula)).